We begin with the raw amino-acid sequence, 765 residues long: Ubiquitin-like modifier-activating enzyme atg7 (765 aa).

The GXGXXG motif signature appears at 436–441; sequence GAGTLG. C616 serves as the catalytic Glycyl thioester intermediate. 2 disordered regions span residues 646–670 and 744–765; these read AAPA…PPNH and AAND…PELL. The tract at residues 721–760 is homodimerization; that stretch reads ALTEKDYITELSGLAEVQRKAEAAANDVEWDSDEEGMEDE. A compositionally biased stretch (acidic residues) spans 748-765; sequence VEWDSDEEGMEDEEPELL.

The protein belongs to the ATG7 family. Homodimer. Interacts with ATG8 through a thioester bond between Cys-616 and the C-terminal Gly of ATG8 and with ATG12 through a thioester bond between Cys-616 and the C-terminal Gly of ATG12. Also interacts with ATG3.

It is found in the cytoplasm. The protein resides in the preautophagosomal structure. E1-like activating enzyme involved in the 2 ubiquitin-like systems required for cytoplasm to vacuole transport (Cvt) and autophagy. Activates ATG12 for its conjugation with ATG5 and ATG8 for its conjugation with phosphatidylethanolamine. Both systems are needed for the ATG8 association to Cvt vesicles and autophagosomes membranes. Autophagy is essential for maintenance of amino acid levels and protein synthesis under nitrogen starvation. Required for selective autophagic degradation of the nucleus (nucleophagy) as well as for mitophagy which contributes to regulate mitochondrial quantity and quality by eliminating the mitochondria to a basal level to fulfill cellular energy requirements and preventing excess ROS production. Required for normal mycelial growth and conidiogenesis, and regulates sclerotial formation. Plays an essential role in pathogenesis. The sequence is that of Ubiquitin-like modifier-activating enzyme atg7 from Botryotinia fuckeliana (strain BcDW1) (Noble rot fungus).